Reading from the N-terminus, the 381-residue chain is Homoserine O-succinyltransferase (381 aa).

Residues 45–360 form the AB hydrolase-1 domain; that stretch reads NAVLVCHALN…PHGHDAFLLD (316 aa). The active-site Nucleophile is the S151. Residue R221 coordinates substrate. Active-site residues include D321 and H354. A substrate-binding site is contributed by D355.

The protein belongs to the AB hydrolase superfamily. MetX family. Homodimer.

It localises to the cytoplasm. The enzyme catalyses L-homoserine + succinyl-CoA = O-succinyl-L-homoserine + CoA. It functions in the pathway amino-acid biosynthesis; L-methionine biosynthesis via de novo pathway; O-succinyl-L-homoserine from L-homoserine: step 1/1. Its function is as follows. Transfers a succinyl group from succinyl-CoA to L-homoserine, forming succinyl-L-homoserine. This Burkholderia ambifaria (strain ATCC BAA-244 / DSM 16087 / CCUG 44356 / LMG 19182 / AMMD) (Burkholderia cepacia (strain AMMD)) protein is Homoserine O-succinyltransferase.